A 329-amino-acid polypeptide reads, in one-letter code: MEDLKEDIKFIVDETLDFGGLSPSDSHEEEDITVLVSPEKPLRRGLSHRSNPNAVAPALQGVRFSLGPLSPEKLEEILDEANRLAAQLEECALKDSENAAAGPGRPSPRGKPSPRRETFVLKDSPVRDLLPTVSSWSAPPPSNLTGLRSSDKKGSARAGRVTAGKKPSSIKKESPTCNLFSASKNPGRSPLAQPTLPPRRKTGSGARTVASPPIPVRPAPQSSASNSQCSSWLQGAAAKSSSRLPFPSAIPKPAIRMPLTGRSIPAGKGALAPDPLPTQKGHPSTVGHRAPVSQRTNLPTIGAARGRTSSAARGRVQPLRKAAVPGPTR.

Ser22 is modified (phosphoserine). The stretch at 38-41 (PEKP) is repeat 1. Phosphoserine is present on residues Ser47, Ser65, and Ser70. 2 repeat units span residues 68-71 (PLSP) and 103-106 (PGRP). The interval 68–215 (PLSPEKLEEI…ARTVASPPIP (148 aa)) is 5 X 4 AA repeats of P-X-X-P. Residues 70-94 (SPEKLEEILDEANRLAAQLEECALK) adopt a coiled-coil conformation. The segment at 94–329 (KDSENAAAGP…RKAAVPGPTR (236 aa)) is disordered. A compositionally biased stretch (basic and acidic residues) spans 114–126 (PRRETFVLKDSPV). A Phosphoserine modification is found at Ser124. 2 stretches are compositionally biased toward polar residues: residues 132 to 148 (TVSS…TGLR) and 175 to 186 (PTCNLFSASKNP). Thr145 carries the post-translational modification Phosphothreonine. Ser189 bears the Phosphoserine mark. 2 repeat units span residues 194–197 (PTLP) and 212–215 (PPIP). Composition is skewed to low complexity over residues 219-231 (APQS…QCSS) and 302-315 (GAAR…ARGR).

This sequence belongs to the PSRC1 family. Interacts with APC2. Interacts with KIF2A. Interacts with ANKRD53; recruits ANKRD53 to the spindle during mitosis. Post-translationally, phosphorylated during mitosis.

Its subcellular location is the cytoplasm. It localises to the cytoskeleton. The protein resides in the spindle. It is found in the spindle pole. Its function is as follows. Required for normal progression through mitosis. Required for normal congress of chromosomes at the metaphase plate, and for normal rate of chromosomal segregation during anaphase. Plays a role in the regulation of mitotic spindle dynamics. Increases the rate of turnover of microtubules on metaphase spindles, and contributes to the generation of normal tension across sister kinetochores. Recruits KIF2A and ANKRD53 to the mitotic spindle and spindle poles. May participate in p53/TP53-regulated growth suppression. This is Proline/serine-rich coiled-coil protein 1 (Psrc1) from Rattus norvegicus (Rat).